A 3083-amino-acid chain; its full sequence is Genome polyprotein (3083 aa).

The Peptidase S30 domain maps to 173–313; it reads IVCVDDVNNL…VLFYSDVEHY (141 aa). Ser267 functions as the For P1 proteinase activity in the catalytic mechanism. An Involved in interaction with stylet and aphid transmission motif is present at residues 365–368; the sequence is KLSC. The Involved in virions binding and aphid transmission motif lies at 621 to 623; that stretch reads PTK. Residues 647–769 form the Peptidase C6 domain; that stretch reads MYIAKEGYCY…QSEMKHYRVG (123 aa). Catalysis depends on for helper component proteinase activity residues Cys655 and His728. In terms of domain architecture, Helicase ATP-binding spans 1239–1391; the sequence is EIASSSEGEF…TQFAVKVKTE (153 aa). Position 1252–1259 (1252–1259) interacts with ATP; the sequence is GAVGSGKS. Positions 1341-1344 match the DECH box motif; sequence DECH. Positions 1410–1569 constitute a Helicase C-terminal domain; the sequence is DMVQHGNNIL…GLSVTTHGVS (160 aa). Residues 1894-1903 carry the Nuclear localization signal motif; that stretch reads KRGKVKGNNS. O-(5'-phospho-RNA)-tyrosine is present on Tyr1918. Residues 2045 to 2263 enclose the Peptidase C4 domain; it reads SKSIYKGVRD…IAWGSLNLVD (219 aa). Catalysis depends on for nuclear inclusion protein A activity residues His2090, Asp2125, and Cys2195. Residues 2529–2653 form the RdRp catalytic domain; it reads WLYCHADGSQ…AVKDEDSGLL (125 aa). A disordered region spans residues 2808-2855; sequence QTREAGAGASKKDKDEDKDKKKDVASSSASEKAVATATKDKDVNAGSH. Over residues 2817–2831 the composition is skewed to basic and acidic residues; it reads SKKDKDEDKDKKKDV. Low complexity predominate over residues 2832-2844; it reads ASSSASEKAVATA. Position 3065 is a phosphothreonine (Thr3065).

This sequence belongs to the potyviridae genome polyprotein family. In terms of assembly, interacts with host eIF4E protein (via cap-binding region); this interaction mediates the translation of the VPg-viral RNA conjugates. Part of a complex that comprises VPg, RNA, host EIF4E and EIF4G; this interaction mediates the translation of the VPg-viral RNA conjugates. Post-translationally, VPg is uridylylated by the polymerase and is covalently attached to the 5'-end of the genomic RNA. This uridylylated form acts as a nucleotide-peptide primer for the polymerase. In terms of processing, potyviral RNA is expressed as two polyproteins which undergo post-translational proteolytic processing. Genome polyprotein is processed by NIa-pro, P1 and HC-pro proteinases resulting in the production of at least ten individual proteins. P3N-PIPO polyprotein is cleaved by P1 and HC-pro proteinases resulting in the production of three individual proteins. The P1 proteinase and the HC-pro cleave only their respective C-termini autocatalytically. 6K1 is essential for proper proteolytic separation of P3 from CI.

The protein resides in the host cytoplasmic vesicle. The protein localises to the host nucleus. Its subcellular location is the virion. The enzyme catalyses RNA(n) + a ribonucleoside 5'-triphosphate = RNA(n+1) + diphosphate. It catalyses the reaction Hydrolyzes glutaminyl bonds, and activity is further restricted by preferences for the amino acids in P6 - P1' that vary with the species of potyvirus, e.g. Glu-Xaa-Xaa-Tyr-Xaa-Gln-|-(Ser or Gly) for the enzyme from tobacco etch virus. The natural substrate is the viral polyprotein, but other proteins and oligopeptides containing the appropriate consensus sequence are also cleaved.. The catalysed reaction is Hydrolyzes a Gly-|-Gly bond at its own C-terminus, commonly in the sequence -Tyr-Xaa-Val-Gly-|-Gly, in the processing of the potyviral polyprotein.. In terms of biological role, required for aphid transmission and also has proteolytic activity. Only cleaves a Gly-Gly dipeptide at its own C-terminus. Interacts with virions and aphid stylets. Acts as a suppressor of RNA-mediated gene silencing, also known as post-transcriptional gene silencing (PTGS), a mechanism of plant viral defense that limits the accumulation of viral RNAs. May have RNA-binding activity. Functionally, has helicase activity. It may be involved in replication. Indispensable for virus replication. Reduces the abundance of host transcripts related to jasmonic acid biosynthesis therefore altering the host defenses. In order to increase its own stability, decreases host protein degradation pathways. Its function is as follows. Indispensable for virus replication. In terms of biological role, mediates the cap-independent, EIF4E-dependent translation of viral genomic RNAs. Binds to the cap-binding site of host EIF4E and thus interferes with the host EIF4E-dependent mRNA export and translation. VPg-RNA directly binds EIF4E and is a template for transcription. Also forms trimeric complexes with EIF4E-EIF4G, which are templates for translation. Functionally, has RNA-binding and proteolytic activities. An RNA-dependent RNA polymerase that plays an essential role in the virus replication. Its function is as follows. Involved in aphid transmission, cell-to-cell and systemis movement, encapsidation of the viral RNA and in the regulation of viral RNA amplification. This is Genome polyprotein from Zucchini yellow mosaic virus (strain Singapore) (ZYMV).